Reading from the N-terminus, the 341-residue chain is Inner membrane ABC transporter permease protein YejE (341 aa).

At 1 to 21 (MSRLSPVNQARWARFRHNRRG) the chain is on the cytoplasmic side. Residues 22 to 42 (YWSLWIFLVLFGLSLCSELIA) traverse the membrane as a helical segment. Over 43–143 (NDKPLLVRYD…ARILYGTRIS (101 aa)) the chain is Periplasmic. In terms of domain architecture, ABC transmembrane type-1 spans 140-332 (TRISVLFGLM…LLIFIGEAVR (193 aa)). Residues 144 to 164 (VLFGLMLTLCSSVMGVLAGAL) form a helical membrane-spanning segment. The Cytoplasmic portion of the chain corresponds to 165–178 (QGYYGGKVDLWGQR). Residues 179–199 (FIEVWSGMPTLFLIILLSSVV) traverse the membrane as a helical segment. Residues 200 to 201 (QP) lie on the Periplasmic side of the membrane. A helical transmembrane segment spans residues 202–222 (NFWWLLAITVLFGWMSLVGVV). Topologically, residues 223-252 (RAEFLRTRNFDYIRAAQALGVSDRSIILRH) are cytoplasmic. Residues 253-273 (MLPNAMVATLTFLPFILCSSI) form a helical membrane-spanning segment. The Periplasmic portion of the chain corresponds to 274-307 (TTLTSLDFLGFGLPLGSPSLGELLLQGKNNLQAP). The helical transmembrane segment at 308–328 (WLGITAFLSVAILLSLLIFIG) threads the bilayer. The Cytoplasmic segment spans residues 329–341 (EAVRDAFDPNKAV).

It belongs to the binding-protein-dependent transport system permease family. OppBC subfamily.

It is found in the cell inner membrane. Functionally, probably part of a binding-protein-dependent transport system. Probably responsible for the translocation of the substrate across the membrane. The chain is Inner membrane ABC transporter permease protein YejE (yejE) from Escherichia coli (strain K12).